Consider the following 335-residue polypeptide: Homeobox protein DBX1 (335 aa).

2 disordered regions span residues 56–102 and 240–335; these read RSIP…LSPA and KERE…ITVS. Positions 83–95 are enriched in low complexity; that stretch reads GSPGSGSRRGSSP. Positions 181–240 form a DNA-binding region, homeobox; that stretch reads GMLRRAVFSDVQRKALEKTFQKQKYISKPDRKKLASKLGLKDSQVKIWFQNRRMKWRNSK. A compositionally biased stretch (low complexity) spans 299–317; the sequence is GPLPASPAHSSSPGKPSDF. Residues 318–335 are compositionally biased toward acidic residues; sequence SDSDEDEEGEEDEEITVS.

Belongs to the H2.0 homeobox family.

The protein localises to the nucleus. In terms of biological role, could have a role in patterning the central nervous system during embryogenesis. Has a key role in regulating the distinct phenotypic features that distinguish two major classes of ventral interneurons, V0 and V1 neurons. Regulates the transcription factor profile, neurotransmitter phenotype, intraspinal migratory path and axonal trajectory of V0 neurons, features that differentiate them from an adjacent set of V1 neurons. The protein is Homeobox protein DBX1 (Dbx1) of Rattus norvegicus (Rat).